A 408-amino-acid chain; its full sequence is Arginine biosynthesis bifunctional protein ArgJ (408 aa).

Residues Thr158, Lys184, Thr195, Glu281, Asn403, and Thr408 each contribute to the substrate site. The active-site Nucleophile is the Thr195.

It belongs to the ArgJ family. Heterotetramer of two alpha and two beta chains.

Its subcellular location is the cytoplasm. The catalysed reaction is N(2)-acetyl-L-ornithine + L-glutamate = N-acetyl-L-glutamate + L-ornithine. It carries out the reaction L-glutamate + acetyl-CoA = N-acetyl-L-glutamate + CoA + H(+). Its pathway is amino-acid biosynthesis; L-arginine biosynthesis; L-ornithine and N-acetyl-L-glutamate from L-glutamate and N(2)-acetyl-L-ornithine (cyclic): step 1/1. It functions in the pathway amino-acid biosynthesis; L-arginine biosynthesis; N(2)-acetyl-L-ornithine from L-glutamate: step 1/4. Functionally, catalyzes two activities which are involved in the cyclic version of arginine biosynthesis: the synthesis of N-acetylglutamate from glutamate and acetyl-CoA as the acetyl donor, and of ornithine by transacetylation between N(2)-acetylornithine and glutamate. In Bacillus thuringiensis subsp. konkukian (strain 97-27), this protein is Arginine biosynthesis bifunctional protein ArgJ.